Consider the following 1027-residue polypeptide: A-factor-processing enzyme (1027 aa).

Zn(2+) is bound at residue His118. The active-site Proton acceptor is the Glu121. Positions 122 and 199 each coordinate Zn(2+).

Belongs to the peptidase M16 family. Zn(2+) is required as a cofactor.

It localises to the membrane. Inhibited by chelating agents like EDTA, TPEN and 1,1-phenanthroline, as well as NEM, free cysteine and DTT. Involved in the N-terminal endoproteolytic cleavage of the P2 precursor of the a-factor mating pheromone. Capable of proteolysing the established mammalian insulin-degrading enzymes (IDEs) substrates amyloid-beta peptide and insulin B-chain. The sequence is that of A-factor-processing enzyme (STE23) from Saccharomyces cerevisiae (strain ATCC 204508 / S288c) (Baker's yeast).